Here is a 462-residue protein sequence, read N- to C-terminus: Hydroxymethylglutaryl-CoA synthase (462 aa).

The active-site Proton donor/acceptor is Glu-92. Cys-124 serves as the catalytic Acyl-thioester intermediate. Residues Cys-124, Thr-167, Ser-219, His-257, Lys-266, Asn-327, and Ser-360 each coordinate (3S)-3-hydroxy-3-methylglutaryl-CoA. The Proton donor/acceptor role is filled by His-257. A Glycyl lysine isopeptide (Lys-Gly) (interchain with G-Cter in SUMO) cross-link involves residue Lys-408.

This sequence belongs to the thiolase-like superfamily. HMG-CoA synthase family. In terms of processing, ubiquitinated.

The enzyme catalyses acetoacetyl-CoA + acetyl-CoA + H2O = (3S)-3-hydroxy-3-methylglutaryl-CoA + CoA + H(+). Its pathway is metabolic intermediate biosynthesis; (R)-mevalonate biosynthesis; (R)-mevalonate from acetyl-CoA: step 2/3. In terms of biological role, this enzyme condenses acetyl-CoA with acetoacetyl-CoA to form HMG-CoA, which is the substrate for HMG-CoA reductase. The chain is Hydroxymethylglutaryl-CoA synthase from Caenorhabditis elegans.